The following is a 562-amino-acid chain: Beta-hexosaminidase (562 aa).

The N-terminal stretch at methionine 1–alanine 22 is a signal peptide. Residues asparagine 38, asparagine 52, asparagine 111, asparagine 337, asparagine 382, asparagine 396, and asparagine 463 are each glycosylated (N-linked (GlcNAc...) asparagine).

This sequence belongs to the glycosyl hydrolase 20 family.

The catalysed reaction is Hydrolysis of terminal non-reducing N-acetyl-D-hexosamine residues in N-acetyl-beta-D-hexosaminides.. Has a broad substrate specificity. The sequence is that of Beta-hexosaminidase (HEX1) from Candida albicans (Yeast).